Consider the following 444-residue polypeptide: Chitinase-like protein Idgf1 (444 aa).

The N-terminal stretch at 1–20 (MTSLLFVILNIILTLHLCAG) is a signal peptide. Residues 29–444 (KRLICYYDAQ…PILRSVRGHL (416 aa)) form the GH18 domain. An intrachain disulfide couples cysteine 33 to cysteine 60. N-linked (GlcNAc...) asparagine glycans are attached at residues asparagine 213, asparagine 225, and asparagine 335. Cysteine 346 and cysteine 429 are joined by a disulfide.

It belongs to the glycosyl hydrolase 18 family. IDGF subfamily. In terms of processing, glycosylated.

The protein resides in the secreted. Its function is as follows. Cooperates with insulin-like peptides to stimulate the proliferation, polarization and motility of imaginal disk cells. May act by stabilizing the binding of insulin-like peptides to its receptor through a simultaneous interaction with both molecules to form a multiprotein signaling complex. In Glossina morsitans morsitans (Savannah tsetse fly), this protein is Chitinase-like protein Idgf1 (Idgf1).